We begin with the raw amino-acid sequence, 248 residues long: Flagellar L-ring protein (248 aa).

An N-terminal signal peptide occupies residues 1–23 (MRHAFRHSVRTLGLLGLLPVLSA). A lipid anchor (N-palmitoyl cysteine) is attached at Cys24. Cys24 is lipidated: S-diacylglycerol cysteine.

The protein belongs to the FlgH family. In terms of assembly, the basal body constitutes a major portion of the flagellar organelle and consists of four rings (L,P,S, and M) mounted on a central rod.

The protein resides in the cell outer membrane. It localises to the bacterial flagellum basal body. Functionally, assembles around the rod to form the L-ring and probably protects the motor/basal body from shearing forces during rotation. The sequence is that of Flagellar L-ring protein from Gluconobacter oxydans (strain 621H) (Gluconobacter suboxydans).